Here is a 56-residue protein sequence, read N- to C-terminus: Preprotein translocase subunit SecG (56 aa).

The Cytoplasmic segment spans residues 1 to 30 (MARKDKKTLPASGAGIVRYFNDDTAGVKLS). Residues 31–52 (PKQVVIGTIIVALICIALRFTT) form a helical membrane-spanning segment. The Extracellular portion of the chain corresponds to 53–56 (SVGY).

It belongs to the SEC61-beta family. Component of the protein translocase complex. Heterotrimer consisting of alpha (SecY), beta (SecG) and gamma (SecE) subunits. Can form oligomers of the heterotrimer.

It localises to the cell membrane. In terms of biological role, involved in protein export. The function of the beta subunit is unknown, but it may be involved in stabilization of the trimeric complex. This chain is Preprotein translocase subunit SecG, found in Methanosphaera stadtmanae (strain ATCC 43021 / DSM 3091 / JCM 11832 / MCB-3).